Reading from the N-terminus, the 316-residue chain is Ribosomal protein L11 methyltransferase (316 aa).

S-adenosyl-L-methionine-binding residues include Thr157, Gly178, Asp200, and Asn243.

Belongs to the methyltransferase superfamily. PrmA family.

It is found in the cytoplasm. It catalyses the reaction L-lysyl-[protein] + 3 S-adenosyl-L-methionine = N(6),N(6),N(6)-trimethyl-L-lysyl-[protein] + 3 S-adenosyl-L-homocysteine + 3 H(+). Functionally, methylates ribosomal protein L11. The chain is Ribosomal protein L11 methyltransferase from Streptococcus pneumoniae (strain JJA).